The chain runs to 239 residues: MQKLELLYEGKAKRIYRTESADMVWVEYKDSATAFNGEKKETITGKGRLNNEITTLLFRKLQEVGIKTHFVEKLSETEQLVKKVSIIPLEVVTRNVIAGSLSKRLGMEEGTVLAEPIVEFYFKDDDLGDPLVTEDHIRVLNVASPEQVSVLRDMALQINQVLIDHFASCRVRLVDFKLEFGVTDEGEIILADEISPDTCRLWDETSNEKFDKDVFRRDLGNLTDAYEEILKRLGGISHV.

The protein belongs to the SAICAR synthetase family.

It carries out the reaction 5-amino-1-(5-phospho-D-ribosyl)imidazole-4-carboxylate + L-aspartate + ATP = (2S)-2-[5-amino-1-(5-phospho-beta-D-ribosyl)imidazole-4-carboxamido]succinate + ADP + phosphate + 2 H(+). The protein operates within purine metabolism; IMP biosynthesis via de novo pathway; 5-amino-1-(5-phospho-D-ribosyl)imidazole-4-carboxamide from 5-amino-1-(5-phospho-D-ribosyl)imidazole-4-carboxylate: step 1/2. This Bacillus cereus (strain AH187) protein is Phosphoribosylaminoimidazole-succinocarboxamide synthase.